Here is a 507-residue protein sequence, read N- to C-terminus: Chromosomal replication initiator protein DnaA (507 aa).

Positions 1 to 87 (MSVELWQQCV…IGSKRSSAPR (87 aa)) are domain I, interacts with DnaA modulators. Residues 85 to 110 (APRAAPNAPLAAAQVSQAQANAAPAS) show a composition bias toward low complexity. Residues 85–158 (APRAAPNAPL…QQAPVRAEQR (74 aa)) are disordered. A domain II region spans residues 87 to 170 (RAAPNAPLAA…QVEGALKHTS (84 aa)). Residues 126 to 140 (QKTEEISEEPSRDSF) show a composition bias toward basic and acidic residues. The domain III, AAA+ region stretch occupies residues 171–387 (YLNRTFTFEN…GALKRVIAHS (217 aa)). ATP-binding residues include glycine 215, glycine 217, lysine 218, and threonine 219. A domain IV, binds dsDNA region spans residues 388–507 (HFMGRDITIE…YKNLLRTLTT (120 aa)).

This sequence belongs to the DnaA family. As to quaternary structure, oligomerizes as a right-handed, spiral filament on DNA at oriC.

The protein resides in the cytoplasm. In terms of biological role, plays an essential role in the initiation and regulation of chromosomal replication. ATP-DnaA binds to the origin of replication (oriC) to initiate formation of the DNA replication initiation complex once per cell cycle. Binds the DnaA box (a 9 base pair repeat at the origin) and separates the double-stranded (ds)DNA. Forms a right-handed helical filament on oriC DNA; dsDNA binds to the exterior of the filament while single-stranded (ss)DNA is stabiized in the filament's interior. The ATP-DnaA-oriC complex binds and stabilizes one strand of the AT-rich DNA unwinding element (DUE), permitting loading of DNA polymerase. After initiation quickly degrades to an ADP-DnaA complex that is not apt for DNA replication. Binds acidic phospholipids. The protein is Chromosomal replication initiator protein DnaA of Pseudomonas fluorescens (strain Pf0-1).